The primary structure comprises 150 residues: FAD synthase (150 aa).

Residues 10–11 (VF), 15–18 (HPGH), Asp-97, and Tyr-124 each bind ATP.

Belongs to the archaeal FAD synthase family. As to quaternary structure, homodimer. The cofactor is a divalent metal cation.

It catalyses the reaction FMN + ATP + H(+) = FAD + diphosphate. The protein operates within cofactor biosynthesis; FAD biosynthesis; FAD from FMN: step 1/1. In terms of biological role, catalyzes the transfer of the AMP portion of ATP to flavin mononucleotide (FMN) to produce flavin adenine dinucleotide (FAD) coenzyme. In Methanopyrus kandleri (strain AV19 / DSM 6324 / JCM 9639 / NBRC 100938), this protein is FAD synthase.